The sequence spans 199 residues: Chaperone protein TorD (199 aa).

It belongs to the TorD/DmsD family. TorD subfamily.

The protein resides in the cytoplasm. Its function is as follows. Involved in the biogenesis of TorA. Acts on TorA before the insertion of the molybdenum cofactor and, as a result, probably favors a conformation of the apoenzyme that is competent for acquiring the cofactor. In Escherichia coli (strain K12 / MC4100 / BW2952), this protein is Chaperone protein TorD.